We begin with the raw amino-acid sequence, 204 residues long: Outer-membrane lipoprotein LolB (204 aa).

A signal peptide spans 1-16 (MLRHLLVFSLIALLAG). A lipid anchor (N-palmitoyl cysteine) is attached at Cys17. The S-diacylglycerol cysteine moiety is linked to residue Cys17.

This sequence belongs to the LolB family. In terms of assembly, monomer.

It localises to the cell outer membrane. In terms of biological role, plays a critical role in the incorporation of lipoproteins in the outer membrane after they are released by the LolA protein. In Ectopseudomonas mendocina (strain ymp) (Pseudomonas mendocina), this protein is Outer-membrane lipoprotein LolB.